The chain runs to 482 residues: ATP synthase subunit beta (482 aa).

162–169 is an ATP binding site; that stretch reads GGAGVGKT.

It belongs to the ATPase alpha/beta chains family. F-type ATPases have 2 components, CF(1) - the catalytic core - and CF(0) - the membrane proton channel. CF(1) has five subunits: alpha(3), beta(3), gamma(1), delta(1), epsilon(1). CF(0) has four main subunits: a(1), b(1), b'(1) and c(9-12).

The protein localises to the cellular thylakoid membrane. It catalyses the reaction ATP + H2O + 4 H(+)(in) = ADP + phosphate + 5 H(+)(out). Produces ATP from ADP in the presence of a proton gradient across the membrane. The catalytic sites are hosted primarily by the beta subunits. This Trichormus variabilis (strain ATCC 29413 / PCC 7937) (Anabaena variabilis) protein is ATP synthase subunit beta.